Consider the following 342-residue polypeptide: Tetraacyldisaccharide 4'-kinase (342 aa).

68–75 lines the ATP pocket; the sequence is TVGGTGKT.

This sequence belongs to the LpxK family.

It catalyses the reaction a lipid A disaccharide + ATP = a lipid IVA + ADP + H(+). It participates in glycolipid biosynthesis; lipid IV(A) biosynthesis; lipid IV(A) from (3R)-3-hydroxytetradecanoyl-[acyl-carrier-protein] and UDP-N-acetyl-alpha-D-glucosamine: step 6/6. Its function is as follows. Transfers the gamma-phosphate of ATP to the 4'-position of a tetraacyldisaccharide 1-phosphate intermediate (termed DS-1-P) to form tetraacyldisaccharide 1,4'-bis-phosphate (lipid IVA). The polypeptide is Tetraacyldisaccharide 4'-kinase (Burkholderia vietnamiensis (strain G4 / LMG 22486) (Burkholderia cepacia (strain R1808))).